Consider the following 437-residue polypeptide: Histidine--tRNA ligase (437 aa).

The protein belongs to the class-II aminoacyl-tRNA synthetase family. In terms of assembly, homodimer.

The protein resides in the cytoplasm. The catalysed reaction is tRNA(His) + L-histidine + ATP = L-histidyl-tRNA(His) + AMP + diphosphate + H(+). The chain is Histidine--tRNA ligase from Leptospira biflexa serovar Patoc (strain Patoc 1 / Ames).